We begin with the raw amino-acid sequence, 314 residues long: Ribosomal RNA small subunit methyltransferase H (314 aa).

Residues 36-38 (GGH), D56, F83, D104, and Q111 contribute to the S-adenosyl-L-methionine site.

It belongs to the methyltransferase superfamily. RsmH family.

The protein resides in the cytoplasm. It catalyses the reaction cytidine(1402) in 16S rRNA + S-adenosyl-L-methionine = N(4)-methylcytidine(1402) in 16S rRNA + S-adenosyl-L-homocysteine + H(+). Specifically methylates the N4 position of cytidine in position 1402 (C1402) of 16S rRNA. This chain is Ribosomal RNA small subunit methyltransferase H, found in Syntrophotalea carbinolica (strain DSM 2380 / NBRC 103641 / GraBd1) (Pelobacter carbinolicus).